The primary structure comprises 203 residues: Histidine biosynthesis bifunctional protein HisIE (203 aa).

Positions 1-108 (MELDFDKMNG…GEKNEEPVMF (108 aa)) are phosphoribosyl-AMP cyclohydrolase. The tract at residues 109 to 203 (LKALQDFIDK…ERHSSTWKKH (95 aa)) is phosphoribosyl-ATP pyrophosphohydrolase.

It in the N-terminal section; belongs to the PRA-CH family. This sequence in the C-terminal section; belongs to the PRA-PH family.

Its subcellular location is the cytoplasm. It catalyses the reaction 1-(5-phospho-beta-D-ribosyl)-ATP + H2O = 1-(5-phospho-beta-D-ribosyl)-5'-AMP + diphosphate + H(+). It carries out the reaction 1-(5-phospho-beta-D-ribosyl)-5'-AMP + H2O = 1-(5-phospho-beta-D-ribosyl)-5-[(5-phospho-beta-D-ribosylamino)methylideneamino]imidazole-4-carboxamide. The protein operates within amino-acid biosynthesis; L-histidine biosynthesis; L-histidine from 5-phospho-alpha-D-ribose 1-diphosphate: step 2/9. Its pathway is amino-acid biosynthesis; L-histidine biosynthesis; L-histidine from 5-phospho-alpha-D-ribose 1-diphosphate: step 3/9. The protein is Histidine biosynthesis bifunctional protein HisIE of Bacteroides thetaiotaomicron (strain ATCC 29148 / DSM 2079 / JCM 5827 / CCUG 10774 / NCTC 10582 / VPI-5482 / E50).